Consider the following 321-residue polypeptide: MIFIYAIIALLITFILVPILIPTLKRMKFGQSIREEGPQSHMKKTGTPTMGGLTFLISIIITSIIAIIFVDHSNPIILLLFVTIGFGLIGFIDDYIIVVKKNNQGLTSKQKFLAQIIIAVIFFVLSDVFHLVHFTTDLHIPFVNFDIPLSFAYVIFIVFWQVGFSNAVNLTDGLDGLATGLSIIGFAMYAVMSYMLDSPAIGIFCIIMIFALLGFLPYNLNPAKVFMGDTGSLALGGIFATISIMLNQELSLILIGFVFVVETLSVMLQVASYKLTKKRIFKMSPIHHHFELSGWGEWKVVTVFWTVGLITGLIGLWIGVH.

A run of 10 helical transmembrane segments spans residues 1–21 (MIFI…PILI), 50–70 (MGGL…IIFV), 76–96 (IILL…DDYI), 112–132 (FLAQ…FHLV), 140–160 (IPFV…IVFW), 176–196 (GLAT…SYML), 200–220 (AIGI…PYNL), 225–245 (VFMG…ISIM), 250–270 (LSLI…MLQV), and 300–320 (VVTV…WIGV).

This sequence belongs to the glycosyltransferase 4 family. MraY subfamily. The cofactor is Mg(2+).

It localises to the cell membrane. The catalysed reaction is UDP-N-acetyl-alpha-D-muramoyl-L-alanyl-gamma-D-glutamyl-L-lysyl-D-alanyl-D-alanine + di-trans,octa-cis-undecaprenyl phosphate = Mur2Ac(oyl-L-Ala-gamma-D-Glu-L-Lys-D-Ala-D-Ala)-di-trans,octa-cis-undecaprenyl diphosphate + UMP. It functions in the pathway cell wall biogenesis; peptidoglycan biosynthesis. In terms of biological role, catalyzes the initial step of the lipid cycle reactions in the biosynthesis of the cell wall peptidoglycan: transfers peptidoglycan precursor phospho-MurNAc-pentapeptide from UDP-MurNAc-pentapeptide onto the lipid carrier undecaprenyl phosphate, yielding undecaprenyl-pyrophosphoryl-MurNAc-pentapeptide, known as lipid I. The sequence is that of Phospho-N-acetylmuramoyl-pentapeptide-transferase from Staphylococcus epidermidis (strain ATCC 35984 / DSM 28319 / BCRC 17069 / CCUG 31568 / BM 3577 / RP62A).